Here is a 207-residue protein sequence, read N- to C-terminus: Large ribosomal subunit protein uL4 (207 aa).

A disordered region spans residues 54-76 (RSAVRGGGRKPWRQKGTGRARQG). Basic residues predominate over residues 60–71 (GGRKPWRQKGTG).

The protein belongs to the universal ribosomal protein uL4 family. Part of the 50S ribosomal subunit.

Functionally, one of the primary rRNA binding proteins, this protein initially binds near the 5'-end of the 23S rRNA. It is important during the early stages of 50S assembly. It makes multiple contacts with different domains of the 23S rRNA in the assembled 50S subunit and ribosome. Its function is as follows. Forms part of the polypeptide exit tunnel. The polypeptide is Large ribosomal subunit protein uL4 (Staphylococcus haemolyticus (strain JCSC1435)).